The chain runs to 501 residues: Endonuclease domain-containing 1 protein (501 aa).

A signal peptide spans 1–21; it reads MGCARWLALGGLLALAGLLQA. At Lys408 the chain carries N6-acetyllysine.

This sequence belongs to the DNA/RNA non-specific endonuclease family. As to quaternary structure, interacts with RNF26; this interaction is important to modulate innate immune signaling through the cGAS-STING pathway.

Its subcellular location is the secreted. Its function is as follows. May act as a DNase and a RNase. Plays a role in the modulation of innate immune signaling through the cGAS-STING pathway by interacting with RNF26. The chain is Endonuclease domain-containing 1 protein (Endod1) from Mus musculus (Mouse).